We begin with the raw amino-acid sequence, 343 residues long: Holliday junction branch migration complex subunit RuvB (343 aa).

Residues 1–181 (MDRIIDTAAT…FGIVQRLEFY (181 aa)) are large ATPase domain (RuvB-L). ATP is bound by residues I20, R21, G62, K65, T66, T67, 128–130 (EDF), R171, Y181, and R218. T66 contacts Mg(2+). The segment at 182-252 (SPEDLARIVR…VAQAAMQMLK (71 aa)) is small ATPAse domain (RuvB-S). Positions 255-343 (QGGFDELDRR…SAFTDPEDLF (89 aa)) are head domain (RuvB-H). Positions 291, 310, and 315 each coordinate DNA.

It belongs to the RuvB family. As to quaternary structure, homohexamer. Forms an RuvA(8)-RuvB(12)-Holliday junction (HJ) complex. HJ DNA is sandwiched between 2 RuvA tetramers; dsDNA enters through RuvA and exits via RuvB. An RuvB hexamer assembles on each DNA strand where it exits the tetramer. Each RuvB hexamer is contacted by two RuvA subunits (via domain III) on 2 adjacent RuvB subunits; this complex drives branch migration. In the full resolvosome a probable DNA-RuvA(4)-RuvB(12)-RuvC(2) complex forms which resolves the HJ.

The protein localises to the cytoplasm. The catalysed reaction is ATP + H2O = ADP + phosphate + H(+). The RuvA-RuvB-RuvC complex processes Holliday junction (HJ) DNA during genetic recombination and DNA repair, while the RuvA-RuvB complex plays an important role in the rescue of blocked DNA replication forks via replication fork reversal (RFR). RuvA specifically binds to HJ cruciform DNA, conferring on it an open structure. The RuvB hexamer acts as an ATP-dependent pump, pulling dsDNA into and through the RuvAB complex. RuvB forms 2 homohexamers on either side of HJ DNA bound by 1 or 2 RuvA tetramers; 4 subunits per hexamer contact DNA at a time. Coordinated motions by a converter formed by DNA-disengaged RuvB subunits stimulates ATP hydrolysis and nucleotide exchange. Immobilization of the converter enables RuvB to convert the ATP-contained energy into a lever motion, pulling 2 nucleotides of DNA out of the RuvA tetramer per ATP hydrolyzed, thus driving DNA branch migration. The RuvB motors rotate together with the DNA substrate, which together with the progressing nucleotide cycle form the mechanistic basis for DNA recombination by continuous HJ branch migration. Branch migration allows RuvC to scan DNA until it finds its consensus sequence, where it cleaves and resolves cruciform DNA. The sequence is that of Holliday junction branch migration complex subunit RuvB from Xylella fastidiosa (strain 9a5c).